The following is a 157-amino-acid chain: S-ribosylhomocysteine lyase (157 aa).

The Fe cation site is built by H54, H58, and C124.

This sequence belongs to the LuxS family. Homodimer. Fe cation serves as cofactor.

The enzyme catalyses S-(5-deoxy-D-ribos-5-yl)-L-homocysteine = (S)-4,5-dihydroxypentane-2,3-dione + L-homocysteine. In terms of biological role, involved in the synthesis of autoinducer 2 (AI-2) which is secreted by bacteria and is used to communicate both the cell density and the metabolic potential of the environment. The regulation of gene expression in response to changes in cell density is called quorum sensing. Catalyzes the transformation of S-ribosylhomocysteine (RHC) to homocysteine (HC) and 4,5-dihydroxy-2,3-pentadione (DPD). The protein is S-ribosylhomocysteine lyase of Pediococcus pentosaceus (strain ATCC 25745 / CCUG 21536 / LMG 10740 / 183-1w).